Reading from the N-terminus, the 192-residue chain is UPF0312 protein Spro_1887 (192 aa).

A signal peptide spans 1 to 23 (MLKKTVLGLTAGAMLLSAGSALA).

The protein belongs to the UPF0312 family. Type 1 subfamily.

Its subcellular location is the periplasm. The sequence is that of UPF0312 protein Spro_1887 from Serratia proteamaculans (strain 568).